Consider the following 394-residue polypeptide: Tryptophan synthase beta chain (394 aa).

At Lys90 the chain carries N6-(pyridoxal phosphate)lysine.

Belongs to the TrpB family. In terms of assembly, tetramer of two alpha and two beta chains. Pyridoxal 5'-phosphate is required as a cofactor.

It carries out the reaction (1S,2R)-1-C-(indol-3-yl)glycerol 3-phosphate + L-serine = D-glyceraldehyde 3-phosphate + L-tryptophan + H2O. Its pathway is amino-acid biosynthesis; L-tryptophan biosynthesis; L-tryptophan from chorismate: step 5/5. Its function is as follows. The beta subunit is responsible for the synthesis of L-tryptophan from indole and L-serine. This is Tryptophan synthase beta chain from Parabacteroides distasonis (strain ATCC 8503 / DSM 20701 / CIP 104284 / JCM 5825 / NCTC 11152).